A 440-amino-acid chain; its full sequence is 3-phosphoshikimate 1-carboxyvinyltransferase (440 aa).

3-phosphoshikimate-binding residues include Lys26, Ser27, and Arg31. Lys26 contacts phosphoenolpyruvate. Residues Gly99 and Arg127 each contribute to the phosphoenolpyruvate site. Residues Ser172, Gln174, Asp320, and Lys347 each contribute to the 3-phosphoshikimate site. Gln174 contributes to the phosphoenolpyruvate binding site. Asp320 (proton acceptor) is an active-site residue. 2 residues coordinate phosphoenolpyruvate: Arg351 and Arg392.

Belongs to the EPSP synthase family. As to quaternary structure, monomer.

It localises to the cytoplasm. It carries out the reaction 3-phosphoshikimate + phosphoenolpyruvate = 5-O-(1-carboxyvinyl)-3-phosphoshikimate + phosphate. It functions in the pathway metabolic intermediate biosynthesis; chorismate biosynthesis; chorismate from D-erythrose 4-phosphate and phosphoenolpyruvate: step 6/7. Catalyzes the transfer of the enolpyruvyl moiety of phosphoenolpyruvate (PEP) to the 5-hydroxyl of shikimate-3-phosphate (S3P) to produce enolpyruvyl shikimate-3-phosphate and inorganic phosphate. This Xanthomonas euvesicatoria pv. vesicatoria (strain 85-10) (Xanthomonas campestris pv. vesicatoria) protein is 3-phosphoshikimate 1-carboxyvinyltransferase.